Reading from the N-terminus, the 288-residue chain is Energy-coupling factor transporter ATP-binding protein EcfA2 (288 aa).

The ABC transporter domain occupies 3–245 (IKIENLTHVY…VDTLESVGLA (243 aa)). 40 to 47 (GHTGSGKS) serves as a coordination point for ATP.

It belongs to the ABC transporter superfamily. Energy-coupling factor EcfA family. In terms of assembly, forms a stable energy-coupling factor (ECF) transporter complex composed of 2 membrane-embedded substrate-binding proteins (S component), 2 ATP-binding proteins (A component) and 2 transmembrane proteins (T component).

It localises to the cell membrane. ATP-binding (A) component of a common energy-coupling factor (ECF) ABC-transporter complex. Unlike classic ABC transporters this ECF transporter provides the energy necessary to transport a number of different substrates. The chain is Energy-coupling factor transporter ATP-binding protein EcfA2 from Clostridium tetani (strain Massachusetts / E88).